The chain runs to 419 residues: Heparan-sulfate 6-O-sulfotransferase 3-B (419 aa).

The Cytoplasmic portion of the chain corresponds to 1–7 (MNDKPNK). Residues 8–28 (WIFIPILAILFVMIGYQYVCP) traverse the membrane as a helical; Signal-anchor for type II membrane protein segment. Over 29 to 419 (AGGQACHFRT…EDYASQVVRW (391 aa)) the chain is Lumenal. An N-linked (GlcNAc...) asparagine glycan is attached at asparagine 77. Position 101–109 (101–109 (HIQKTGGTT)) interacts with 3'-phosphoadenylyl sulfate. Residues 131-132 (KK), arginine 148, tryptophan 153, and histidine 158 each bind substrate. The Proton acceptor role is filled by histidine 158. 3'-phosphoadenylyl sulfate contacts are provided by arginine 191 and serine 199. Substrate is bound by residues histidine 203 and tryptophan 210. Residues asparagine 270 and asparagine 275 are each glycosylated (N-linked (GlcNAc...) asparagine). Position 323–325 (323–325 (TQI)) interacts with 3'-phosphoadenylyl sulfate. Asparagine 326 carries an N-linked (GlcNAc...) asparagine glycan. Residue 329 to 330 (RA) participates in 3'-phosphoadenylyl sulfate binding. N-linked (GlcNAc...) asparagine glycans are attached at residues asparagine 393 and asparagine 402.

The protein belongs to the sulfotransferase 6 family. As to expression, in early somitogenesis, expressed in presumptive forebrain and midbrain, tail bud and Kupffer's vesicle. During mid-somitogenesis, ubiquitous expression which is strongest in the somites and eye. During late somitogenesis, predominantly expressed in eye, hindbrain and ventral somites. At 24 hours post-fertilization (hpf), restricted to lens and neural retina, brain, otic vesicle and somites. At 36 hpf, brain expression is restricted to telencephalon. At 48 hpf, restricted to telencephalon and pectoral fin.

It is found in the membrane. It carries out the reaction alpha-D-glucosaminyl-[heparan sulfate](n) + 3'-phosphoadenylyl sulfate = 6-sulfo-alpha-D-glucosaminyl-[heparan sulfate](n) + adenosine 3',5'-bisphosphate + H(+). Its function is as follows. 6-O-sulfation enzyme which catalyzes the transfer of sulfate from 3'-phosphoadenosine 5'-phosphosulfate (PAPS) to position 6 of the N-sulfoglucosamine residue (GlcNS) of heparan sulfate. This is Heparan-sulfate 6-O-sulfotransferase 3-B from Danio rerio (Zebrafish).